The following is a 537-amino-acid chain: CTP synthase (537 aa).

Positions 1-268 are amidoligase domain; sequence MSTKYIFVTG…DQIVCDHLKL (268 aa). Ser-14 contributes to the CTP binding site. Ser-14 contributes to the UTP binding site. 15 to 20 contributes to the ATP binding site; the sequence is SIGKGI. Residue Tyr-55 coordinates L-glutamine. Asp-72 contributes to the ATP binding site. Positions 72 and 142 each coordinate Mg(2+). Residues 149 to 151, 189 to 194, and Lys-225 contribute to the CTP site; these read DIE and KTKPTQ. Residues 189–194 and Lys-225 contribute to the UTP site; that span reads KTKPTQ. The Glutamine amidotransferase type-1 domain occupies 293-536; that stretch reads RIALVGKYVE…VTAAVEKSSD (244 aa). Position 355 (Gly-355) interacts with L-glutamine. Cys-382 (nucleophile; for glutamine hydrolysis) is an active-site residue. L-glutamine contacts are provided by residues 383-386, Glu-406, and Arg-464; that span reads LGMQ. Catalysis depends on residues His-509 and Glu-511.

This sequence belongs to the CTP synthase family. Homotetramer.

It carries out the reaction UTP + L-glutamine + ATP + H2O = CTP + L-glutamate + ADP + phosphate + 2 H(+). The catalysed reaction is L-glutamine + H2O = L-glutamate + NH4(+). It catalyses the reaction UTP + NH4(+) + ATP = CTP + ADP + phosphate + 2 H(+). Its pathway is pyrimidine metabolism; CTP biosynthesis via de novo pathway; CTP from UDP: step 2/2. With respect to regulation, allosterically activated by GTP, when glutamine is the substrate; GTP has no effect on the reaction when ammonia is the substrate. The allosteric effector GTP functions by stabilizing the protein conformation that binds the tetrahedral intermediate(s) formed during glutamine hydrolysis. Inhibited by the product CTP, via allosteric rather than competitive inhibition. Its function is as follows. Catalyzes the ATP-dependent amination of UTP to CTP with either L-glutamine or ammonia as the source of nitrogen. Regulates intracellular CTP levels through interactions with the four ribonucleotide triphosphates. The polypeptide is CTP synthase (Streptococcus sanguinis (strain SK36)).